Here is a 227-residue protein sequence, read N- to C-terminus: MEISGLVYLIIIVTIIDLPYGKANNYCKIKCLKGGVHTACKYGSLKPNCGNKVVVSYGLTKQEKQDILKEHNDFRQKVARGLETRGNPGPQPPAKNMKNLVWNDELAYVAQVWANQCQYGHDTCRDVAKYQVGQNVALTGSTAAKYENPVNLVKMWENEVKDYNPKKKFSENNFIKIGHYTQMVWANTKEIGCGSMKYTENKWHYHYLVCNYGPSGNFGNEELYQTK.

A signal peptide spans M1–A23. 4 disulfide bridges follow: C27–C40, C31–C124, C49–C117, and C193–C210. In terms of domain architecture, SCP spans L68–Y212.

The protein belongs to the CRISP family. Venom allergen 5-like subfamily. Expressed by the venom gland.

It is found in the secreted. In Vespula maculifrons (Eastern yellow jacket), this protein is Venom allergen 5.